A 257-amino-acid polypeptide reads, in one-letter code: 5-oxoprolinase subunit A (257 aa).

It belongs to the LamB/PxpA family. As to quaternary structure, forms a complex composed of PxpA, PxpB and PxpC.

The enzyme catalyses 5-oxo-L-proline + ATP + 2 H2O = L-glutamate + ADP + phosphate + H(+). Functionally, catalyzes the cleavage of 5-oxoproline to form L-glutamate coupled to the hydrolysis of ATP to ADP and inorganic phosphate. The chain is 5-oxoprolinase subunit A from Pectobacterium atrosepticum (strain SCRI 1043 / ATCC BAA-672) (Erwinia carotovora subsp. atroseptica).